A 700-amino-acid chain; its full sequence is Probable transcription factor FUP6 (700 aa).

Disordered stretches follow at residues 343-364 and 577-624; these read SEAGLGRATSEDESSQKHNRHS and FDSV…PLNQ. Residues 577 to 595 are compositionally biased toward polar residues; that stretch reads FDSVHSGRDSVSSAMNYQS. Residues 596–607 are compositionally biased toward basic and acidic residues; sequence DSRKRARLDTES. The segment covering 608 to 623 has biased composition (polar residues); that stretch reads NPRSSQRNDGSGQPLN.

Its subcellular location is the nucleus. Probable transcrition factor; part of the gene cluster that mediates the biosynthesis of the mycotoxin fusaproliferin (FUP) that belongs to the class of bicyclic sesterterpenoids. This Fusarium proliferatum (strain ET1) (Orchid endophyte fungus) protein is Probable transcription factor FUP6.